A 503-amino-acid polypeptide reads, in one-letter code: Probable inactive beta-glucosidase 33 (503 aa).

Residues 1–30 form the signal peptide; it reads MATGELALVSSLFIVVVFLLLGAVAREASA. A beta-D-glucoside contacts are provided by residues Gln-50, His-150, and 195 to 196; that span reads NQ. Cys-215 and Cys-223 are disulfide-bonded. N-linked (GlcNAc...) asparagine glycosylation occurs at Asn-222. Residues Tyr-339 and Glu-399 each coordinate a beta-D-glucoside. The Nucleophile role is filled by Glu-399. An N-linked (GlcNAc...) asparagine glycan is attached at Asn-436. Residues Trp-446, 453-454, and Phe-462 each bind a beta-D-glucoside; that span reads EF.

This sequence belongs to the glycosyl hydrolase 1 family.

The protein is Probable inactive beta-glucosidase 33 (BGLU33) of Oryza sativa subsp. japonica (Rice).